The primary structure comprises 602 residues: Bifunctional xylanase/deacetylase (602 aa).

Residues 1–14 (MSATLLVPSMTVKA) form the signal peptide. A GH11 domain is found at 17-211 (TIYNNKTGNQ…SSGSASVYKN (195 aa)). Catalysis depends on Glu-108, which acts as the Nucleophile. Catalysis depends on Glu-198, which acts as the Proton donor. Residues 216 to 240 (GGSSSSSGNQGGNQGGNTGNENAGN) form a disordered region. Over residues 224-233 (NQGGNQGGNT) the composition is skewed to gly residues. Positions 249-366 (DKIQCETMTK…DAYLDYFNNS (118 aa)) constitute a CBM6 domain. In terms of domain architecture, NodB homology spans 402–578 (KLIALTFDDG…GLKNQGYTFV (177 aa)).

Belongs to the glycosyl hydrolase 11 (cellulase G) family. In terms of processing, in the later growth phases, seems to undergo a proteolytic cleavage into a 30 kDa protein possessing xylanolytic activity.

The protein resides in the secreted. The catalysed reaction is Endohydrolysis of (1-&gt;4)-beta-D-xylosidic linkages in xylans.. The protein operates within glycan degradation; xylan degradation. Endo-acting xylanase which specifically cleaves internal linkages on the xylan backbone, releasing xylooligosaccharides. Is also probably able, via its C-terminal domain, to remove acetyl groups from acetylated xylan, and thus it is probably capable of hydrolyzing acetylated xylan. This is Bifunctional xylanase/deacetylase (xyn11A) from Pseudobutyrivibrio xylanivorans.